The chain runs to 257 residues: MSSELNVPVDPSTPACCSEPGTKGMDYRDWVRRSYLELVTSNHHSVQALSWRKLYLSRAKLKASSRTSALLSGFAMVAMVEVQLEMQYKYPQMLLIAFSACTTVLVAVHLFALLISTCILPNVEAVSNIHNLNSISESPHERMHPYIELAWGFSTVLGILLFLAEVVLLCWIKFLPVDSILKNDTTTIQKPSGHAGWQAALVSTIIMVPVGLIFVVFTIHFYRSLVRHKTERHNREIEELHKLKVQLDGHDRGMQVV.

4 helical membrane-spanning segments follow: residues 67–84 (TSAL…EVQL), 95–115 (LIAF…ALLI), 149–169 (LAWG…VVLL), and 199–219 (AALV…VFTI).

Belongs to the Orai family.

The protein resides in the membrane. Its function is as follows. Ca(2+) release-activated Ca(2+)-like (CRAC-like) channel subunit which mediates Ca(2+) influx and increase in Ca(2+)-selective current by synergy with the Ca(2+) sensor, STIM1. The sequence is that of Protein orai-2 (ORAI2) from Gallus gallus (Chicken).